Reading from the N-terminus, the 293-residue chain is Xylanase inhibitor protein XIP (293 aa).

The first 21 residues, 1–21 (MALRRLAALLSLAVLLSAGLA), serve as a signal peptide directing secretion. Positions 31–293 (GDTVIIWGRN…DKKTGFTAHL (263 aa)) constitute a GH18 domain. 2 disulfide bridges follow: Cys-50/Cys-92 and Cys-189/Cys-218.

This sequence belongs to the glycosyl hydrolase 18 family. Xylanase inhibitor subfamily. As to expression, expressed in mature grain.

It is found in the secreted. In terms of biological role, fungal xylanase inhibitor. Possesses competitive inhibiting activity against several fungal endo-1,4-beta-D-xylanases belonging to glycoside hydrolase family 10 (GH10) and family 11 (GH11). May function in plant defense against secreted fungal pathogen xylanases. Is similar to class III chitinases, but does not exhibit chitinase activity. In Oryza sativa subsp. japonica (Rice), this protein is Xylanase inhibitor protein XIP.